The primary structure comprises 92 residues: Putative pterin-4-alpha-carbinolamine dehydratase (92 aa).

Belongs to the pterin-4-alpha-carbinolamine dehydratase family.

The enzyme catalyses (4aS,6R)-4a-hydroxy-L-erythro-5,6,7,8-tetrahydrobiopterin = (6R)-L-erythro-6,7-dihydrobiopterin + H2O. This chain is Putative pterin-4-alpha-carbinolamine dehydratase, found in Haloarcula marismortui (strain ATCC 43049 / DSM 3752 / JCM 8966 / VKM B-1809) (Halobacterium marismortui).